The primary structure comprises 306 residues: Ornithine carbamoyltransferase (306 aa).

Carbamoyl phosphate contacts are provided by residues 46-49 (STRT), Q73, R97, and 124-127 (HPTQ). L-ornithine contacts are provided by residues N156, D220, and 224 to 225 (SM). Residues 260–261 (CL) and R288 contribute to the carbamoyl phosphate site.

This sequence belongs to the aspartate/ornithine carbamoyltransferase superfamily. OTCase family.

Its subcellular location is the cytoplasm. The catalysed reaction is carbamoyl phosphate + L-ornithine = L-citrulline + phosphate + H(+). Its pathway is amino-acid biosynthesis; L-arginine biosynthesis; L-arginine from L-ornithine and carbamoyl phosphate: step 1/3. In terms of biological role, reversibly catalyzes the transfer of the carbamoyl group from carbamoyl phosphate (CP) to the N(epsilon) atom of ornithine (ORN) to produce L-citrulline. The protein is Ornithine carbamoyltransferase of Campylobacter jejuni subsp. jejuni serotype O:23/36 (strain 81-176).